Consider the following 174-residue polypeptide: NADH-quinone oxidoreductase subunit B 2 (174 aa).

[4Fe-4S] cluster contacts are provided by Cys38, Cys39, Cys104, and Cys133.

Belongs to the complex I 20 kDa subunit family. In terms of assembly, NDH-1 is composed of 14 different subunits. Subunits NuoB, C, D, E, F, and G constitute the peripheral sector of the complex. It depends on [4Fe-4S] cluster as a cofactor.

Its subcellular location is the cell membrane. The enzyme catalyses a quinone + NADH + 5 H(+)(in) = a quinol + NAD(+) + 4 H(+)(out). Functionally, NDH-1 shuttles electrons from NADH, via FMN and iron-sulfur (Fe-S) centers, to quinones in the respiratory chain. The immediate electron acceptor for the enzyme in this species is believed to be ubiquinone. Couples the redox reaction to proton translocation (for every two electrons transferred, four hydrogen ions are translocated across the cytoplasmic membrane), and thus conserves the redox energy in a proton gradient. The chain is NADH-quinone oxidoreductase subunit B 2 from Chloroflexus aurantiacus (strain ATCC 29366 / DSM 635 / J-10-fl).